A 475-amino-acid polypeptide reads, in one-letter code: Aspartyl/glutamyl-tRNA(Asn/Gln) amidotransferase subunit B (475 aa).

The protein belongs to the GatB/GatE family. GatB subfamily. In terms of assembly, heterotrimer of A, B and C subunits.

It carries out the reaction L-glutamyl-tRNA(Gln) + L-glutamine + ATP + H2O = L-glutaminyl-tRNA(Gln) + L-glutamate + ADP + phosphate + H(+). The enzyme catalyses L-aspartyl-tRNA(Asn) + L-glutamine + ATP + H2O = L-asparaginyl-tRNA(Asn) + L-glutamate + ADP + phosphate + 2 H(+). Allows the formation of correctly charged Asn-tRNA(Asn) or Gln-tRNA(Gln) through the transamidation of misacylated Asp-tRNA(Asn) or Glu-tRNA(Gln) in organisms which lack either or both of asparaginyl-tRNA or glutaminyl-tRNA synthetases. The reaction takes place in the presence of glutamine and ATP through an activated phospho-Asp-tRNA(Asn) or phospho-Glu-tRNA(Gln). The polypeptide is Aspartyl/glutamyl-tRNA(Asn/Gln) amidotransferase subunit B (Thiobacillus denitrificans (strain ATCC 25259 / T1)).